Reading from the N-terminus, the 377-residue chain is Succinyl-diaminopimelate desuccinylase (377 aa).

A Zn(2+)-binding site is contributed by His67. Residue Asp69 is part of the active site. Asp100 contacts Zn(2+). Residue Glu134 is the Proton acceptor of the active site. Residues Glu135, Glu163, and His349 each coordinate Zn(2+).

Belongs to the peptidase M20A family. DapE subfamily. Homodimer. Zn(2+) serves as cofactor. Co(2+) is required as a cofactor.

It carries out the reaction N-succinyl-(2S,6S)-2,6-diaminopimelate + H2O = (2S,6S)-2,6-diaminopimelate + succinate. Its pathway is amino-acid biosynthesis; L-lysine biosynthesis via DAP pathway; LL-2,6-diaminopimelate from (S)-tetrahydrodipicolinate (succinylase route): step 3/3. Catalyzes the hydrolysis of N-succinyl-L,L-diaminopimelic acid (SDAP), forming succinate and LL-2,6-diaminopimelate (DAP), an intermediate involved in the bacterial biosynthesis of lysine and meso-diaminopimelic acid, an essential component of bacterial cell walls. This Actinobacillus pleuropneumoniae serotype 3 (strain JL03) protein is Succinyl-diaminopimelate desuccinylase.